Here is a 478-residue protein sequence, read N- to C-terminus: Glutamate--tRNA ligase (478 aa).

A 'HIGH' region motif is present at residues 9–19 (PSPTGLLHIGT). Positions 248-252 (KLSKR) match the 'KMSKS' region motif. Lysine 251 contacts ATP.

It belongs to the class-I aminoacyl-tRNA synthetase family. Glutamate--tRNA ligase type 1 subfamily. As to quaternary structure, monomer.

It localises to the cytoplasm. It carries out the reaction tRNA(Glu) + L-glutamate + ATP = L-glutamyl-tRNA(Glu) + AMP + diphosphate. Functionally, catalyzes the attachment of glutamate to tRNA(Glu) in a two-step reaction: glutamate is first activated by ATP to form Glu-AMP and then transferred to the acceptor end of tRNA(Glu). This Prochlorococcus marinus subsp. pastoris (strain CCMP1986 / NIES-2087 / MED4) protein is Glutamate--tRNA ligase.